Here is a 325-residue protein sequence, read N- to C-terminus: tRNA N6-adenosine threonylcarbamoyltransferase (325 aa).

His-107, His-111, and Tyr-127 together coordinate Fe cation. Substrate-binding positions include 127–131, Asp-159, Gly-172, Glu-176, and Asn-257; that span reads YVSGG. Asp-285 lines the Fe cation pocket.

It belongs to the KAE1 / TsaD family. Monomer. Component of the KEOPS complex that consists of Kae1, Bud32, Cgi121 and Pcc1; the whole complex dimerizes. Fe(2+) serves as cofactor.

It localises to the cytoplasm. The enzyme catalyses L-threonylcarbamoyladenylate + adenosine(37) in tRNA = N(6)-L-threonylcarbamoyladenosine(37) in tRNA + AMP + H(+). Functionally, required for the formation of a threonylcarbamoyl group on adenosine at position 37 (t(6)A37) in tRNAs that read codons beginning with adenine. Is a component of the KEOPS complex that is probably involved in the transfer of the threonylcarbamoyl moiety of threonylcarbamoyl-AMP (TC-AMP) to the N6 group of A37. Kae1 likely plays a direct catalytic role in this reaction, but requires other protein(s) of the complex to fulfill this activity. The protein is tRNA N6-adenosine threonylcarbamoyltransferase of Thermococcus kodakarensis (strain ATCC BAA-918 / JCM 12380 / KOD1) (Pyrococcus kodakaraensis (strain KOD1)).